A 112-amino-acid chain; its full sequence is Ferredoxin-2 (112 aa).

4Fe-4S ferredoxin-type domains are found at residues 2–30 and 31–60; these read TYVV…YEGE and NTLV…PDTE. The [3Fe-4S] cluster site is built by Cys-9 and Cys-17. Positions 21, 40, 43, and 46 each coordinate [4Fe-4S] cluster. Cys-50 provides a ligand contact to [3Fe-4S] cluster. Residues 85–103 are compositionally biased toward basic and acidic residues; it reads DPMPDHKKYDGETGKREKY. Residues 85–112 are disordered; that stretch reads DPMPDHKKYDGETGKREKYFSPNPGTGD.

The cofactor is [4Fe-4S] cluster. [3Fe-4S] cluster is required as a cofactor.

Functionally, ferredoxins are iron-sulfur proteins that transfer electrons in a wide variety of metabolic reactions. The polypeptide is Ferredoxin-2 (fdxA) (Rhodobacter capsulatus (strain ATCC BAA-309 / NBRC 16581 / SB1003)).